Here is a 149-residue protein sequence, read N- to C-terminus: Calmodulin-2 (149 aa).

Residue Ala-2 is modified to N-acetylalanine. EF-hand domains lie at 8–43 (EQIA…LGQN), 44–79 (PTEG…KMKD), 81–116 (DSEE…PGEK), and 117–149 (LTDE…MTSK). Ca(2+) is bound by residues Asp-21, Asp-23, Asn-25, Asn-27, Glu-32, Asp-57, Asp-59, Asn-61, Thr-63, Glu-68, Asp-94, Asp-96, Asn-98, and Glu-105. Lys-116 carries the post-translational modification N6,N6,N6-trimethyllysine. 5 residues coordinate Ca(2+): Asp-130, Asp-132, Asp-134, Gln-136, and Glu-141.

It belongs to the calmodulin family.

Its function is as follows. Calmodulin mediates the control of a large number of enzymes, ion channels and other proteins by Ca(2+). Among the enzymes to be stimulated by the calmodulin-Ca(2+) complex are a number of protein kinases and phosphatases. The chain is Calmodulin-2 (CAM2) from Branchiostoma floridae (Florida lancelet).